Consider the following 276-residue polypeptide: Formamidopyrimidine-DNA glycosylase (276 aa).

The active-site Schiff-base intermediate with DNA is Pro2. Glu3 serves as the catalytic Proton donor. The active-site Proton donor; for beta-elimination activity is Lys58. His92, Arg111, and Lys154 together coordinate DNA. An FPG-type zinc finger spans residues 239-273 (QVYGHAGEECSSCGTILEKIKVNGRGTTFCPHCQV). Arg263 functions as the Proton donor; for delta-elimination activity in the catalytic mechanism.

This sequence belongs to the FPG family. As to quaternary structure, monomer. Zn(2+) serves as cofactor.

The catalysed reaction is Hydrolysis of DNA containing ring-opened 7-methylguanine residues, releasing 2,6-diamino-4-hydroxy-5-(N-methyl)formamidopyrimidine.. The enzyme catalyses 2'-deoxyribonucleotide-(2'-deoxyribose 5'-phosphate)-2'-deoxyribonucleotide-DNA = a 3'-end 2'-deoxyribonucleotide-(2,3-dehydro-2,3-deoxyribose 5'-phosphate)-DNA + a 5'-end 5'-phospho-2'-deoxyribonucleoside-DNA + H(+). In terms of biological role, involved in base excision repair of DNA damaged by oxidation or by mutagenic agents. Acts as a DNA glycosylase that recognizes and removes damaged bases. Has a preference for oxidized purines, such as 7,8-dihydro-8-oxoguanine (8-oxoG). Has AP (apurinic/apyrimidinic) lyase activity and introduces nicks in the DNA strand. Cleaves the DNA backbone by beta-delta elimination to generate a single-strand break at the site of the removed base with both 3'- and 5'-phosphates. The sequence is that of Formamidopyrimidine-DNA glycosylase from Lactobacillus gasseri (strain ATCC 33323 / DSM 20243 / BCRC 14619 / CIP 102991 / JCM 1131 / KCTC 3163 / NCIMB 11718 / NCTC 13722 / AM63).